The sequence spans 246 residues: Orotidine 5'-phosphate decarboxylase (246 aa).

Substrate-binding positions include aspartate 22, lysine 44, 71 to 80, threonine 130, arginine 191, glutamine 201, glycine 221, and arginine 222; that span reads DLKYHDIPHT. Lysine 73 acts as the Proton donor in catalysis.

This sequence belongs to the OMP decarboxylase family. Type 1 subfamily. Homodimer.

It carries out the reaction orotidine 5'-phosphate + H(+) = UMP + CO2. It participates in pyrimidine metabolism; UMP biosynthesis via de novo pathway; UMP from orotate: step 2/2. Functionally, catalyzes the decarboxylation of orotidine 5'-monophosphate (OMP) to uridine 5'-monophosphate (UMP). This Neisseria meningitidis serogroup A / serotype 4A (strain DSM 15465 / Z2491) protein is Orotidine 5'-phosphate decarboxylase.